The chain runs to 469 residues: Alpha,alpha-trehalose-phosphate synthase [UDP-forming] (469 aa).

Residues Tyr87 and Asp141 each coordinate D-glucose 6-phosphate. Residues Arg279 and Lys284 each coordinate UDP. UDP-alpha-D-glucose contacts are provided by Arg279 and Lys284. D-glucose 6-phosphate is bound at residue Arg317. 378–386 contributes to the UDP-alpha-D-glucose binding site; the sequence is DGMNLVSYE. Residue 382–386 participates in UDP binding; the sequence is LVSYE.

Belongs to the glycosyltransferase 20 family.

It carries out the reaction D-glucose 6-phosphate + UDP-alpha-D-glucose = alpha,alpha-trehalose 6-phosphate + UDP + H(+). The protein operates within carbohydrate biosynthesis. Synthase catalytic subunit of the trehalose synthase complex that catalyzes the production of trehalose from glucose-6-phosphate and UDP-alpha-D-glucose in a two step process. The disaccharide trehalose serves as a storage carbohydrate that is mobilized during spore germination. The protein is Alpha,alpha-trehalose-phosphate synthase [UDP-forming] of Yarrowia lipolytica (strain CLIB 122 / E 150) (Yeast).